Here is a 152-residue protein sequence, read N- to C-terminus: Protein-export protein SecB (152 aa).

It belongs to the SecB family. Homotetramer, a dimer of dimers. One homotetramer interacts with 1 SecA dimer.

The protein resides in the cytoplasm. One of the proteins required for the normal export of preproteins out of the cell cytoplasm. It is a molecular chaperone that binds to a subset of precursor proteins, maintaining them in a translocation-competent state. It also specifically binds to its receptor SecA. The chain is Protein-export protein SecB from Verminephrobacter eiseniae (strain EF01-2).